We begin with the raw amino-acid sequence, 977 residues long: Glutamate receptor 2 (977 aa).

Positions 1–19 are cleaved as a signal peptide; sequence MNKNLLVFGFLIFVKIGET. Over 20 to 621 the chain is Extracellular; sequence SKKFPLRAFV…FSFMEPLGMT (602 aa). Residues Asn-36, Asn-227, Asn-291, Asn-427, Asn-532, and Asn-566 are each glycosylated (N-linked (GlcNAc...) asparagine). A helical membrane pass occupies residues 622–642; sequence IWIFTLSSYFGVSLTIFLVSW. The Cytoplasmic segment spans residues 643–695; it reads FSPYEKRIEFKRGEFTVTNEFTLYNSLWFTLAAFMQQGTDILPRAVSGRIASS. Residues 696-716 traverse the membrane as a helical segment; that stretch reads CWWFFTLIIVSSYTANLAAFL. At 717 to 898 the chain is on the extracellular side; sequence TLERMTPPIE…GTSSSLNLSK (182 aa). N-linked (GlcNAc...) asparagine glycosylation is found at Asn-783 and Asn-895. The chain crosses the membrane as a helical span at residues 899 to 919; the sequence is VAGIFYILLAGMVLSMCTALV. At 920 to 977 the chain is on the cytoplasmic side; that stretch reads EFLFRKNKENREKERNRMRSSRPLKPGILASCERAKQKQLQNRRTKSEEVSTPRSTLF. Residues 954–977 form a disordered region; it reads AKQKQLQNRRTKSEEVSTPRSTLF.

The protein belongs to the glutamate-gated ion channel (TC 1.A.10.1) family. Command interneurons of the locomotory control circuit (AIA, AIB, AVA, AVD, AVE, PVC, RIA, RIG and RIR) and motor neurons (AVG, M1, RMDD and RMDV).

It localises to the membrane. It is found in the postsynaptic cell membrane. In terms of biological role, L-glutamate acts as an excitatory neurotransmitter at many synapses in the central nervous system. The postsynaptic actions of glutamate are mediated by a variety of receptors that are named according to their selective agonists. Required for response to mechanical and osmotic stimuli. In Caenorhabditis elegans, this protein is Glutamate receptor 2 (glr-2).